Consider the following 162-residue polypeptide: NADH-quinone oxidoreductase subunit I (162 aa).

4Fe-4S ferredoxin-type domains lie at 53-83 and 93-122; these read LRRY…IESE and TRYD…EGPN. [4Fe-4S] cluster contacts are provided by Cys-63, Cys-66, Cys-69, Cys-73, Cys-102, Cys-105, Cys-108, and Cys-112.

The protein belongs to the complex I 23 kDa subunit family. In terms of assembly, NDH-1 is composed of 14 different subunits. Subunits NuoA, H, J, K, L, M, N constitute the membrane sector of the complex. The cofactor is [4Fe-4S] cluster.

It localises to the cell inner membrane. It catalyses the reaction a quinone + NADH + 5 H(+)(in) = a quinol + NAD(+) + 4 H(+)(out). Its function is as follows. NDH-1 shuttles electrons from NADH, via FMN and iron-sulfur (Fe-S) centers, to quinones in the respiratory chain. The immediate electron acceptor for the enzyme in this species is believed to be ubiquinone. Couples the redox reaction to proton translocation (for every two electrons transferred, four hydrogen ions are translocated across the cytoplasmic membrane), and thus conserves the redox energy in a proton gradient. In Erythrobacter litoralis (strain HTCC2594), this protein is NADH-quinone oxidoreductase subunit I.